A 335-amino-acid polypeptide reads, in one-letter code: Fructose-1,6-bisphosphatase class 1 (335 aa).

Positions 92, 114, 116, and 117 each coordinate Mg(2+). Substrate contacts are provided by residues 117-120 (DGSS), asparagine 209, and lysine 275. Glutamate 281 is a Mg(2+) binding site.

Belongs to the FBPase class 1 family. In terms of assembly, homotetramer. Mg(2+) is required as a cofactor.

The protein resides in the cytoplasm. The enzyme catalyses beta-D-fructose 1,6-bisphosphate + H2O = beta-D-fructose 6-phosphate + phosphate. The protein operates within carbohydrate biosynthesis; gluconeogenesis. This is Fructose-1,6-bisphosphatase class 1 from Paracidovorax citrulli (strain AAC00-1) (Acidovorax citrulli).